A 592-amino-acid chain; its full sequence is A-type ATP synthase subunit A (592 aa).

Residue 233-240 (GPFGSGKT) participates in ATP binding.

It belongs to the ATPase alpha/beta chains family. Has multiple subunits with at least A(3), B(3), C, D, E, F, H, I and proteolipid K(x).

It localises to the cell membrane. The enzyme catalyses ATP + H2O + 4 H(+)(in) = ADP + phosphate + 5 H(+)(out). Functionally, component of the A-type ATP synthase that produces ATP from ADP in the presence of a proton gradient across the membrane. The A chain is the catalytic subunit. The chain is A-type ATP synthase subunit A from Saccharolobus islandicus (strain L.S.2.15 / Lassen #1) (Sulfolobus islandicus).